A 900-amino-acid polypeptide reads, in one-letter code: Bifunctional uridylyltransferase/uridylyl-removing enzyme (900 aa).

Residues 1 to 342 (MPQVDPELFD…PCEQPVQIQP (342 aa)) are uridylyltransferase. A uridylyl-removing region spans residues 343–705 (LNSRFQLRDG…TTQREFESGS (363 aa)). One can recognise an HD domain in the interval 461-583 (VDAHTLNLIK…VGDQTHLDYL (123 aa)). ACT domains are found at residues 706–789 (QIFI…IIQR) and 816–891 (VLEV…DNGR).

The protein belongs to the GlnD family. The cofactor is Mg(2+).

The enzyme catalyses [protein-PII]-L-tyrosine + UTP = [protein-PII]-uridylyl-L-tyrosine + diphosphate. It carries out the reaction [protein-PII]-uridylyl-L-tyrosine + H2O = [protein-PII]-L-tyrosine + UMP + H(+). Uridylyltransferase (UTase) activity is inhibited by glutamine, while glutamine activates uridylyl-removing (UR) activity. Modifies, by uridylylation and deuridylylation, the PII regulatory proteins (GlnB and homologs), in response to the nitrogen status of the cell that GlnD senses through the glutamine level. Under low glutamine levels, catalyzes the conversion of the PII proteins and UTP to PII-UMP and PPi, while under higher glutamine levels, GlnD hydrolyzes PII-UMP to PII and UMP (deuridylylation). Thus, controls uridylylation state and activity of the PII proteins, and plays an important role in the regulation of nitrogen assimilation and metabolism. This chain is Bifunctional uridylyltransferase/uridylyl-removing enzyme, found in Pseudomonas aeruginosa (strain ATCC 15692 / DSM 22644 / CIP 104116 / JCM 14847 / LMG 12228 / 1C / PRS 101 / PAO1).